Reading from the N-terminus, the 187-residue chain is UPF0232 protein JTY_0004 (187 aa).

2 stretches are compositionally biased toward basic and acidic residues: residues 1–17 and 24–45; these read MTGS…ERSM and LVRR…DAGR. 2 disordered regions span residues 1-75 and 168-187; these read MTGS…DPQP and PSWR…DTYG.

Belongs to the UPF0232 family.

This Mycobacterium bovis (strain BCG / Tokyo 172 / ATCC 35737 / TMC 1019) protein is UPF0232 protein JTY_0004.